Here is a 650-residue protein sequence, read N- to C-terminus: Chaperone protein HtpG (650 aa).

Residues M1 to R349 form an a; substrate-binding region. The tract at residues E350–R566 is b. The interval I567–E650 is c.

The protein belongs to the heat shock protein 90 family. In terms of assembly, homodimer.

The protein localises to the cytoplasm. Its function is as follows. Molecular chaperone. Has ATPase activity. The chain is Chaperone protein HtpG from Geobacter sulfurreducens (strain ATCC 51573 / DSM 12127 / PCA).